Consider the following 291-residue polypeptide: Probable S-adenosylmethionine-dependent methyltransferase CRG1 (291 aa).

Belongs to the methyltransferase superfamily.

It is found in the cytoplasm. Probable S-adenosylmethionine-dependent methyltransferase which mediates cantharidin resistance. The protein is Probable S-adenosylmethionine-dependent methyltransferase CRG1 (CRG1) of Saccharomyces cerevisiae (strain ATCC 204508 / S288c) (Baker's yeast).